Consider the following 188-residue polypeptide: Translocon-associated protein subunit beta (188 aa).

Positions 1–15 (MKFSLFALLFVVVSC) are cleaved as a signal peptide. The Lumenal segment spans residues 16–151 (VDVGTQTRDA…EYDRRFAPKY (136 aa)). N-linked (GlcNAc...) asparagine glycosylation is found at N93 and N109. A helical membrane pass occupies residues 152–172 (TYFLVFFLIVAPTTLGSFLLF). Topologically, residues 173-188 (QQSKARFPNVIKKKST) are cytoplasmic.

Belongs to the TRAP-beta family. As to quaternary structure, heterotetramer of TRAP-alpha, TRAP-beta, TRAP-delta and TRAP-gamma.

The protein resides in the endoplasmic reticulum membrane. Functionally, TRAP proteins are part of a complex whose function is to bind calcium to the ER membrane and thereby regulate the retention of ER resident proteins. The protein is Translocon-associated protein subunit beta of Caenorhabditis elegans.